Reading from the N-terminus, the 161-residue chain is 2-C-methyl-D-erythritol 2,4-cyclodiphosphate synthase (161 aa).

Positions 8 and 10 each coordinate a divalent metal cation. 4-CDP-2-C-methyl-D-erythritol 2-phosphate is bound by residues aspartate 8 to histidine 10 and histidine 34 to serine 35. Histidine 42 provides a ligand contact to a divalent metal cation. 4-CDP-2-C-methyl-D-erythritol 2-phosphate-binding positions include aspartate 56–glycine 58, phenylalanine 61–aspartate 65, alanine 100–alanine 106, threonine 132–glutamate 135, and phenylalanine 139.

The protein belongs to the IspF family. In terms of assembly, homotrimer. It depends on a divalent metal cation as a cofactor.

It catalyses the reaction 4-CDP-2-C-methyl-D-erythritol 2-phosphate = 2-C-methyl-D-erythritol 2,4-cyclic diphosphate + CMP. It participates in isoprenoid biosynthesis; isopentenyl diphosphate biosynthesis via DXP pathway; isopentenyl diphosphate from 1-deoxy-D-xylulose 5-phosphate: step 4/6. Functionally, involved in the biosynthesis of isopentenyl diphosphate (IPP) and dimethylallyl diphosphate (DMAPP), two major building blocks of isoprenoid compounds. Catalyzes the conversion of 4-diphosphocytidyl-2-C-methyl-D-erythritol 2-phosphate (CDP-ME2P) to 2-C-methyl-D-erythritol 2,4-cyclodiphosphate (ME-CPP) with a corresponding release of cytidine 5-monophosphate (CMP). This is 2-C-methyl-D-erythritol 2,4-cyclodiphosphate synthase from Clostridioides difficile (strain 630) (Peptoclostridium difficile).